We begin with the raw amino-acid sequence, 883 residues long: Valine--tRNA ligase (883 aa).

Residues 52–62 carry the 'HIGH' region motif; sequence PNVTGRLHLGH. Positions 529 to 533 match the 'KMSKS' region motif; that stretch reads KMSKS. K532 is an ATP binding site. Positions 813–848 form a coiled coil; the sequence is LEGLIDFDKEIKRLENELAKWTKEVERVQKKLSNQG.

This sequence belongs to the class-I aminoacyl-tRNA synthetase family. ValS type 1 subfamily. In terms of assembly, monomer.

Its subcellular location is the cytoplasm. It catalyses the reaction tRNA(Val) + L-valine + ATP = L-valyl-tRNA(Val) + AMP + diphosphate. In terms of biological role, catalyzes the attachment of valine to tRNA(Val). As ValRS can inadvertently accommodate and process structurally similar amino acids such as threonine, to avoid such errors, it has a 'posttransfer' editing activity that hydrolyzes mischarged Thr-tRNA(Val) in a tRNA-dependent manner. This chain is Valine--tRNA ligase, found in Oceanobacillus iheyensis (strain DSM 14371 / CIP 107618 / JCM 11309 / KCTC 3954 / HTE831).